A 185-amino-acid chain; its full sequence is Photosystem I assembly protein Ycf4 (185 aa).

2 consecutive transmembrane segments (helical) span residues 21-43 (NFFW…ISSY) and 63-85 (GVVM…CTIL).

This sequence belongs to the Ycf4 family.

It is found in the plastid. The protein localises to the chloroplast thylakoid membrane. Its function is as follows. Seems to be required for the assembly of the photosystem I complex. The sequence is that of Photosystem I assembly protein Ycf4 from Aegilops crassa (Persian goatgrass).